The following is a 358-amino-acid chain: ATP synthase gamma chain, chloroplastic (358 aa).

The N-terminal 35 residues, 1 to 35 (MAAMLASKQGAFMGRSSFAPAPKGVASRGSLQVVA), are a transit peptide targeting the chloroplast. Residue cysteine 123 is part of the active site. An intrachain disulfide couples cysteine 233 to cysteine 239.

It belongs to the ATPase gamma chain family. As to quaternary structure, F-type ATPases have 2 components, F(1) - the catalytic core - and F(0) - the membrane proton channel. F(1) has five subunits: alpha(3), beta(3), gamma(1), delta(1), epsilon(1). F(0) has four main subunits: a(1), b(1), b'(1) and c(10-14). The alpha and beta chains form an alternating ring which encloses part of the gamma chain. F(1) is attached to F(0) by a central stalk formed by the gamma and epsilon chains, while a peripheral stalk is formed by the delta, b and b' chains.

It localises to the plastid. The protein localises to the chloroplast thylakoid membrane. Its function is as follows. F(1)F(0) ATP synthase produces ATP from ADP in the presence of a proton or sodium gradient. F-type ATPases consist of two structural domains, F(1) containing the extramembraneous catalytic core and F(0) containing the membrane proton channel, linked together by a central stalk and a peripheral stalk. During catalysis, ATP synthesis in the catalytic domain of F(1) is coupled via a rotary mechanism of the central stalk subunits to proton translocation. Produces ATP from ADP in the presence of a proton gradient across the membrane. The gamma chain is believed to be important in regulating ATPase activity and the flow of protons through the CF(0) complex. This chain is ATP synthase gamma chain, chloroplastic, found in Chlamydomonas reinhardtii (Chlamydomonas smithii).